Here is a 199-residue protein sequence, read N- to C-terminus: ATP-dependent Clp protease proteolytic subunit 3 (199 aa).

Residue serine 101 is the Nucleophile of the active site. Histidine 126 is a catalytic residue.

Belongs to the peptidase S14 family. In terms of assembly, fourteen ClpP subunits assemble into 2 heptameric rings which stack back to back to give a disk-like structure with a central cavity, resembling the structure of eukaryotic proteasomes.

It localises to the cytoplasm. It carries out the reaction Hydrolysis of proteins to small peptides in the presence of ATP and magnesium. alpha-casein is the usual test substrate. In the absence of ATP, only oligopeptides shorter than five residues are hydrolyzed (such as succinyl-Leu-Tyr-|-NHMec, and Leu-Tyr-Leu-|-Tyr-Trp, in which cleavage of the -Tyr-|-Leu- and -Tyr-|-Trp bonds also occurs).. Functionally, cleaves peptides in various proteins in a process that requires ATP hydrolysis. Has a chymotrypsin-like activity. Plays a major role in the degradation of misfolded proteins. This is ATP-dependent Clp protease proteolytic subunit 3 from Synechococcus elongatus (strain ATCC 33912 / PCC 7942 / FACHB-805) (Anacystis nidulans R2).